Reading from the N-terminus, the 550-residue chain is Sterol O-acyltransferase 1 (550 aa).

Met-1 is modified (N-acetylmethionine). The tract at residues 1–36 (MVGEEKMSLRNRLSKSRENPEEDEDQRKPAKESLEA) is disordered. The Cytoplasmic segment spans residues 1 to 138 (MVGEEKMSLR…LDELLEVDHI (138 aa)). Ser-8 carries the phosphoserine modification. Basic and acidic residues predominate over residues 15 to 34 (KSRENPEEDEDQRKPAKESL). Cholesterol is bound at residue His-137. A helical membrane pass occupies residues 139–160 (RTIYHMFIALLILFILSTLVVD). At 161–180 (YIDEGRLVLEFSLLSYAFGK) the chain is on the lumenal side. A helical transmembrane segment spans residues 181–206 (FPTVVWTWWIMFLSTFSVPYFLFQRW). At 207–218 (ATGYSKSSHPLI) the chain is on the cytoplasmic side. The helical transmembrane segment at 219-244 (NSLFHGFLFMVFQIGILGFGPTYVVL) threads the bilayer. At 245–252 (AYTLPPAS) the chain is on the lumenal side. A helical transmembrane segment spans residues 253 to 276 (RFIIIFEQIRFVMKAHSFVRENVP). Residues 277–319 (RVLNSAKEKSSTVPIPTVNQYLYFLFAPTLIYRDSYPRNPTVR) lie on the Cytoplasmic side of the membrane. A helical transmembrane segment spans residues 320-352 (WGYVAMQFAQVFGCFFYVYYIFERLCAPLFRNI). The Lumenal portion of the chain corresponds to 353–369 (KQEPFSARVLVLCVFNS). The helical transmembrane segment at 370–395 (ILPGVLILFLTFFAFLHCWLNAFAEM) threads the bilayer. At 396-443 (LRFGDRMFYKDWWNSTSYSNYYRTWNVVVHDWLYYYAYKDFLWFFSKR) the chain is on the cytoplasmic side. The FYXDWWN motif motif lies at 403-409 (FYKDWWN). The an acyl-CoA site is built by Asn-415, Arg-418, Asn-421, His-425, Tyr-433, Lys-445, and Ser-456. Residues 444–468 (FKSAAMLAVFAVSAVVHEYALAVCL) traverse the membrane as a helical segment. Residue His-460 is part of the active site. The Lumenal portion of the chain corresponds to 469–474 (SFFYPV). A helical membrane pass occupies residues 475-490 (LFVLFMFFGMAFNFIV). At 491 to 496 (NDSRKK) the chain is on the cytoplasmic side. Residues 497–528 (PIWNVMMWTSLFLGNGVLLCFYSQEWYARQHC) traverse the membrane as a helical segment. Residues Cys-528 and Cys-546 are joined by a disulfide bond. At 529–550 (PLKNPTFLDYVRPRSWTCRYVF) the chain is on the lumenal side.

The protein belongs to the membrane-bound acyltransferase family. Sterol o-acyltransferase subfamily. As to quaternary structure, may form homo- or heterodimers. Interacts with UBIAD1. As to expression, expressed in most tissues, but most strongly in the adrenal gland. Expressed more strongly in liver Kupffer cells than in hepatocytes.

It localises to the endoplasmic reticulum membrane. The enzyme catalyses a sterol + a long-chain fatty acyl-CoA = a long-chain 3-hydroxysterol ester + CoA. It catalyses the reaction cholesterol + an acyl-CoA = a cholesterol ester + CoA. The catalysed reaction is cholesterol + (9Z)-octadecenoyl-CoA = cholesteryl (9Z-octadecenoate) + CoA. It carries out the reaction cholesterol + hexadecanoyl-CoA = cholesteryl hexadecanoate + CoA. The enzyme catalyses octadecanoyl-CoA + cholesterol = cholesteryl octadecanoate + CoA. It catalyses the reaction (9Z,12Z)-octadecadienoyl-CoA + cholesterol = cholesteryl (9Z,12Z)-octadecadienoate + CoA. The catalysed reaction is (5Z,8Z,11Z,14Z)-eicosatetraenoyl-CoA + cholesterol = cholesteryl (5Z,8Z,11Z,14Z)-eicosatetraenoate + CoA. It carries out the reaction (9Z)-hexadecenoyl-CoA + cholesterol = cholesteryl (9Z)-hexadecenoate + CoA. The enzyme catalyses (11Z)-octadecenoyl-CoA + cholesterol = cholesteryl (11Z)-octadecenoate + CoA. It catalyses the reaction (7Z)-octadecenoyl-CoA + cholesterol = cholesteryl (7Z)-octadecenoate + CoA. Functionally, catalyzes the formation of fatty acid-cholesterol esters, which are less soluble in membranes than cholesterol. Plays a role in lipoprotein assembly and dietary cholesterol absorption. Preferentially utilizes oleoyl-CoA ((9Z)-octadecenoyl-CoA) as a substrate: shows a higher activity towards an acyl-CoA substrate with a double bond at the delta-9 position (9Z) than towards saturated acyl-CoA or an unsaturated acyl-CoA with a double bond at the delta-7 (7Z) or delta-11 (11Z) positions. The sequence is that of Sterol O-acyltransferase 1 (SOAT1) from Chlorocebus aethiops (Green monkey).